The chain runs to 175 residues: Large ribosomal subunit protein uL10 (175 aa).

Belongs to the universal ribosomal protein uL10 family. As to quaternary structure, part of the ribosomal stalk of the 50S ribosomal subunit. The N-terminus interacts with L11 and the large rRNA to form the base of the stalk. The C-terminus forms an elongated spine to which L12 dimers bind in a sequential fashion forming a multimeric L10(L12)X complex.

Its function is as follows. Forms part of the ribosomal stalk, playing a central role in the interaction of the ribosome with GTP-bound translation factors. The polypeptide is Large ribosomal subunit protein uL10 (rplJ) (Xylella fastidiosa (strain 9a5c)).